Consider the following 503-residue polypeptide: Drimenol monooxygenase (503 aa).

The chain crosses the membrane as a helical span at residues 7 to 23 (MICIVVSGLLLYSSRTS). Residue S471 coordinates heme.

It belongs to the cytochrome P450 family. It depends on heme as a cofactor.

Its subcellular location is the membrane. The catalysed reaction is (5S,9S,10S)-drim-7-en-11-ol + reduced [NADPH--hemoprotein reductase] + O2 = (5S,10S)-(9R)-7-drimene-11,12-diol + oxidized [NADPH--hemoprotein reductase] + H2O + H(+). Functionally, catalyzes the conversion of drimenol to drimendiol, a precursor of the sesquiterpenoid polygodial. Polygodial has been shown to be an antifeedant for a number of herbivorous insects. The sequence is that of Drimenol monooxygenase from Persicaria hydropiper (Marshpepper knotweed).